The following is a 250-amino-acid chain: Probable aquaporin TIP-type RB7-18C (250 aa).

The next 2 helical transmembrane spans lie at 20 to 42 and 55 to 77; these read AYVA…AIAY and GLVA…AANI. The NPA 1 signature appears at 83 to 85; it reads NPA. Transmembrane regions (helical) follow at residues 97 to 119, 140 to 162, and 172 to 194; these read TILT…CLLL, FQGV…ATAA, and IAPI…FSGG. The short motif at 197–199 is the NPA 2 element; sequence NPA. A helical transmembrane segment spans residues 215–237; it reads WIYWAGPLIGGGLAGFIYGDVFI.

Belongs to the MIP/aquaporin (TC 1.A.8) family. TIP (TC 1.A.8.10) subfamily. Roots.

The protein localises to the vacuole membrane. Its function is as follows. Channel protein in tonoplast. These proteins may allow the diffusion of amino acids and/or peptides from the vacuolar compartment to the cytoplasm. The protein is Probable aquaporin TIP-type RB7-18C of Nicotiana tabacum (Common tobacco).